Consider the following 100-residue polypeptide: Aspartyl/glutamyl-tRNA(Asn/Gln) amidotransferase subunit C (100 aa).

This sequence belongs to the GatC family. As to quaternary structure, heterotrimer of A, B and C subunits.

The catalysed reaction is L-glutamyl-tRNA(Gln) + L-glutamine + ATP + H2O = L-glutaminyl-tRNA(Gln) + L-glutamate + ADP + phosphate + H(+). The enzyme catalyses L-aspartyl-tRNA(Asn) + L-glutamine + ATP + H2O = L-asparaginyl-tRNA(Asn) + L-glutamate + ADP + phosphate + 2 H(+). Its function is as follows. Allows the formation of correctly charged Asn-tRNA(Asn) or Gln-tRNA(Gln) through the transamidation of misacylated Asp-tRNA(Asn) or Glu-tRNA(Gln) in organisms which lack either or both of asparaginyl-tRNA or glutaminyl-tRNA synthetases. The reaction takes place in the presence of glutamine and ATP through an activated phospho-Asp-tRNA(Asn) or phospho-Glu-tRNA(Gln). The protein is Aspartyl/glutamyl-tRNA(Asn/Gln) amidotransferase subunit C of Streptococcus pneumoniae (strain P1031).